The sequence spans 271 residues: 3-methyl-2-oxobutanoate hydroxymethyltransferase 2 (271 aa).

Mg(2+)-binding residues include D53 and D92. 3-methyl-2-oxobutanoate-binding positions include 53–54 (DS), D92, and K120. Position 122 (E122) interacts with Mg(2+). E189 (proton acceptor) is an active-site residue.

Belongs to the PanB family. Homodecamer; pentamer of dimers. Mg(2+) serves as cofactor.

The protein localises to the cytoplasm. It catalyses the reaction 3-methyl-2-oxobutanoate + (6R)-5,10-methylene-5,6,7,8-tetrahydrofolate + H2O = 2-dehydropantoate + (6S)-5,6,7,8-tetrahydrofolate. Its pathway is cofactor biosynthesis; (R)-pantothenate biosynthesis; (R)-pantoate from 3-methyl-2-oxobutanoate: step 1/2. Functionally, catalyzes the reversible reaction in which hydroxymethyl group from 5,10-methylenetetrahydrofolate is transferred onto alpha-ketoisovalerate to form ketopantoate. The protein is 3-methyl-2-oxobutanoate hydroxymethyltransferase 2 of Burkholderia lata (strain ATCC 17760 / DSM 23089 / LMG 22485 / NCIMB 9086 / R18194 / 383).